A 327-amino-acid chain; its full sequence is MVLLSKPTSEQYTYVRNNMPITFSSSIPLVDLSKPDAKTLIVKACEDFGFFKVINHGIPLDAISQLESEAFKFFSLPQTEKEKAGPANPFGYGNKRIGLNGDIGWIEYLLLTTNQDHNFSLYGEDIDKFRGLLKDYKCAMRNMACEILDLMAEGLKIQPKNVFSKLVMDKQSDCLFRVNHYPACPELAINGENLIGFGEHTDPQIISILRSNNTSGFQISLRDGSWISVPPDHSSFFINVGDSLQVMTNGRFKSVRHRVLANGIDPRLSMIYFCGPPLSEKIAPLPSLMKGKESLYKEFTWFEYKSSTYGSRLADNRLGNYERIAAT.

The region spanning 171–276 (QSDCLFRVNH…RLSMIYFCGP (106 aa)) is the Fe2OG dioxygenase domain. Positions 200, 202, and 257 each coordinate Fe cation. Residue arginine 267 is part of the active site.

It belongs to the iron/ascorbate-dependent oxidoreductase family. GA2OX subfamily. The cofactor is Fe cation. Predominantly expressed in roots, flowers, young fruits and seeds.

The catalysed reaction is gibberellin A1 + 2-oxoglutarate + O2 = gibberellin A8 + succinate + CO2. It participates in plant hormone biosynthesis; gibberellin biosynthesis. Functionally, catalyzes the 2-beta-hydroxylation of several biologically active gibberellins, leading to the homeostatic regulation of their endogenous level. Catabolism of gibberellins (GAs) plays a central role in plant development. Converts GA9/GA20 to GA51/GA29 and GA4/GA1 to GA34/GA8. This chain is Gibberellin 2-beta-dioxygenase 1 (GA2OX1), found in Pisum sativum (Garden pea).